The primary structure comprises 338 residues: Ketol-acid reductoisomerase (NADP(+)) (338 aa).

A KARI N-terminal Rossmann domain is found at 1–181 (MKVYYDKDAD…GGTKGGVIET (181 aa)). NADP(+) is bound by residues 24–27 (YGSQ), Arg-47, Ser-52, and 82–85 (DESQ). His-107 is a catalytic residue. Gly-133 serves as a coordination point for NADP(+). The 146-residue stretch at 182–327 (NFREETETDL…AELRAMMPWI (146 aa)) folds into the KARI C-terminal knotted domain. The Mg(2+) site is built by Asp-190, Glu-194, Glu-226, and Glu-230. Ser-251 contacts substrate.

It belongs to the ketol-acid reductoisomerase family. It depends on Mg(2+) as a cofactor.

The catalysed reaction is (2R)-2,3-dihydroxy-3-methylbutanoate + NADP(+) = (2S)-2-acetolactate + NADPH + H(+). It catalyses the reaction (2R,3R)-2,3-dihydroxy-3-methylpentanoate + NADP(+) = (S)-2-ethyl-2-hydroxy-3-oxobutanoate + NADPH + H(+). Its pathway is amino-acid biosynthesis; L-isoleucine biosynthesis; L-isoleucine from 2-oxobutanoate: step 2/4. It participates in amino-acid biosynthesis; L-valine biosynthesis; L-valine from pyruvate: step 2/4. Involved in the biosynthesis of branched-chain amino acids (BCAA). Catalyzes an alkyl-migration followed by a ketol-acid reduction of (S)-2-acetolactate (S2AL) to yield (R)-2,3-dihydroxy-isovalerate. In the isomerase reaction, S2AL is rearranged via a Mg-dependent methyl migration to produce 3-hydroxy-3-methyl-2-ketobutyrate (HMKB). In the reductase reaction, this 2-ketoacid undergoes a metal-dependent reduction by NADPH to yield (R)-2,3-dihydroxy-isovalerate. The polypeptide is Ketol-acid reductoisomerase (NADP(+)) (Chromobacterium violaceum (strain ATCC 12472 / DSM 30191 / JCM 1249 / CCUG 213 / NBRC 12614 / NCIMB 9131 / NCTC 9757 / MK)).